Reading from the N-terminus, the 850-residue chain is Protein STB2 (850 aa).

A phosphoserine mark is found at serine 594 and serine 625.

The protein to yeast STB6. Interacts with SIN3.

This is Protein STB2 (STB2) from Saccharomyces cerevisiae (strain ATCC 204508 / S288c) (Baker's yeast).